We begin with the raw amino-acid sequence, 471 residues long: MTPTSDATTMTTPAGAAAPRVGFVSLGCPKALTDSELILTQLSAEGYQTSKTFEGADLVIVNTCGFIDDAVRESLDTIGEALAENGKVIVTGCLGAKAGKDGGNLIQEVHPSVLAVTGPHATQEVMNAVHTHLPKPHDPFIDLVPGAFGEAGIKLTPRHYAYLKISEGCNHRCTFCIIPSMRGDLVSRPVGDVLKEARALFEGGVKELLVISQDTSAYGVDVKYRTGFWDGKPVKTRMLELVQTLAEIAEPYGAWVRLHYVYPYPSVDEIIPFMATGRVLPYLDVPFQHSHPDVLKRMKRPANGERNLERLQRWREICPDLVIRSTFIAGFPGETEQEFEHLLQFLREAQIDRAGCFAYSPVEGAAANEIPGMLPLEVREERRARFMAVAEEVSTARLQKRVGQTMQVLVDKSVGLGKKGGVGRSYADAPEIDGLVHLLPPEKASKTYKVGDFVKARIVGTQGHDLVGQPV.

An MTTase N-terminal domain is found at 19–134; that stretch reads PRVGFVSLGC…VMNAVHTHLP (116 aa). [4Fe-4S] cluster-binding residues include Cys-28, Cys-64, Cys-93, Cys-169, Cys-173, and Cys-176. One can recognise a Radical SAM core domain in the interval 155–396; the sequence is LTPRHYAYLK…MAVAEEVSTA (242 aa). The 73-residue stretch at 399 to 471 folds into the TRAM domain; it reads QKRVGQTMQV…QGHDLVGQPV (73 aa).

It belongs to the methylthiotransferase family. RimO subfamily. Requires [4Fe-4S] cluster as cofactor.

It is found in the cytoplasm. The enzyme catalyses L-aspartate(89)-[ribosomal protein uS12]-hydrogen + (sulfur carrier)-SH + AH2 + 2 S-adenosyl-L-methionine = 3-methylsulfanyl-L-aspartate(89)-[ribosomal protein uS12]-hydrogen + (sulfur carrier)-H + 5'-deoxyadenosine + L-methionine + A + S-adenosyl-L-homocysteine + 2 H(+). Its function is as follows. Catalyzes the methylthiolation of an aspartic acid residue of ribosomal protein uS12. This Delftia acidovorans (strain DSM 14801 / SPH-1) protein is Ribosomal protein uS12 methylthiotransferase RimO.